Here is a 383-residue protein sequence, read N- to C-terminus: Probable cell wall hydrolase LytN (383 aa).

The N-terminal stretch at 1–49 is a signal peptide; that stretch reads MFVYYCKECFIMNKQQSKVRYSIRKVSIGILSISIGMFLALGMSNKAYA. The LysM domain maps to 175 to 219; that stretch reads QIYTVKKGDTLSAIALKYKTTVSNIQNTNNIANPNLIFIGQKLKV. The region spanning 241–378 is the Peptidase C51 domain; that stretch reads NSSTLNYLKT…NYENDMIFIR (138 aa).

Its subcellular location is the secreted. In terms of biological role, probably involved in peptidoglycan hydrolysis. This Staphylococcus aureus (strain NCTC 8325 / PS 47) protein is Probable cell wall hydrolase LytN (lytN).